A 141-amino-acid chain; its full sequence is uncharacterized protein (141 aa).

4 helical membrane passes run 7–27 (VAIMTTISAFLFCAVIVAASL), 47–67 (SAVGMILVLYFIPFLVYMLGV), 75–95 (AVLCGFGLLIHLSSAGFILMF), and 106–126 (VIFVLGVSLAAAAVNVIWFVA).

It is found in the cell membrane. This is an uncharacterized protein from Bacillus subtilis (strain 168).